Here is a 299-residue protein sequence, read N- to C-terminus: tRNA dimethylallyltransferase (299 aa).

11-18 (GPTAVGKT) lines the ATP pocket. Substrate is bound at residue 13-18 (TAVGKT). Positions 36–39 (DSQQ) are interaction with substrate tRNA.

It belongs to the IPP transferase family. As to quaternary structure, monomer. It depends on Mg(2+) as a cofactor.

It catalyses the reaction adenosine(37) in tRNA + dimethylallyl diphosphate = N(6)-dimethylallyladenosine(37) in tRNA + diphosphate. Catalyzes the transfer of a dimethylallyl group onto the adenine at position 37 in tRNAs that read codons beginning with uridine, leading to the formation of N6-(dimethylallyl)adenosine (i(6)A). This is tRNA dimethylallyltransferase from Streptococcus pyogenes serotype M6 (strain ATCC BAA-946 / MGAS10394).